The following is a 255-amino-acid chain: Uridylate kinase (255 aa).

The interval 1–21 (MSAAAAGRGERLNHAGNPGHR) is disordered. 30-33 (KLGG) contacts ATP. Residue Gly-71 participates in UMP binding. Residues Gly-72 and Arg-76 each contribute to the ATP site. UMP-binding positions include Asp-91 and 152-159 (MGLPYFST). The ATP site is built by Phe-185 and Asp-188.

The protein belongs to the UMP kinase family. Homohexamer.

It localises to the cytoplasm. It catalyses the reaction UMP + ATP = UDP + ADP. It functions in the pathway pyrimidine metabolism; CTP biosynthesis via de novo pathway; UDP from UMP (UMPK route): step 1/1. Its activity is regulated as follows. Inhibited by UTP. Its function is as follows. Catalyzes the reversible phosphorylation of UMP to UDP. This is Uridylate kinase from Mycobacterium leprae (strain TN).